A 117-amino-acid chain; its full sequence is Photosystem II reaction center Psb28 protein (117 aa).

This sequence belongs to the Psb28 family. Part of the photosystem II complex.

Its subcellular location is the cellular thylakoid membrane. The polypeptide is Photosystem II reaction center Psb28 protein (Prochlorococcus marinus (strain AS9601)).